The following is a 140-amino-acid chain: ATP synthase epsilon chain (140 aa).

The protein belongs to the ATPase epsilon chain family. As to quaternary structure, F-type ATPases have 2 components, CF(1) - the catalytic core - and CF(0) - the membrane proton channel. CF(1) has five subunits: alpha(3), beta(3), gamma(1), delta(1), epsilon(1). CF(0) has three main subunits: a, b and c.

The protein resides in the cell inner membrane. In terms of biological role, produces ATP from ADP in the presence of a proton gradient across the membrane. This is ATP synthase epsilon chain (atpC) from Vibrio alginolyticus.